The sequence spans 288 residues: Xyloglucan endotransglucosylase protein 8 (288 aa).

A signal peptide spans 1–25 (MAASPYSIFAVQLLLLASWMLSSSS). One can recognise a GH16 domain in the interval 26–215 (SNFNQDFNIA…WTQAPFTTSY (190 aa)). The active-site Nucleophile is glutamate 102. The active-site Proton donor is glutamate 106. Glutamate 106 is a xyloglucan binding site. Residue asparagine 110 is glycosylated (N-linked (GlcNAc...) asparagine). Xyloglucan is bound by residues 119–121 (HTN), 129–131 (ERE), 194–195 (EW), and glycine 199. Cystine bridges form between cysteine 224/cysteine 233 and cysteine 268/cysteine 282. Arginine 273 is a binding site for xyloglucan.

It belongs to the glycosyl hydrolase 16 family. XTH group 2 subfamily. In terms of processing, contains at least one intrachain disulfide bond essential for its enzymatic activity. In terms of tissue distribution, highly expressed in mature fruits. Very low expression in leaves, flowers, calyces and stems.

The protein resides in the secreted. Its subcellular location is the cell wall. It localises to the extracellular space. The protein localises to the apoplast. It catalyses the reaction breaks a beta-(1-&gt;4) bond in the backbone of a xyloglucan and transfers the xyloglucanyl segment on to O-4 of the non-reducing terminal glucose residue of an acceptor, which can be a xyloglucan or an oligosaccharide of xyloglucan.. In terms of biological role, catalyzes xyloglucan endotransglycosylation (XET). Cleaves and religates xyloglucan polymers. Does not catalyze xyloglucan endohydrolysis (XEH). Overexpression in Arabidopsis transgenic plants causes accelerated dark-induced leaf senescence and higher lipid peroxidation of the leaf cells. Overexpression in transgenic tomato plants promotes fruit ripening and softening. Probably involved in cell wall restructuring during postharvest fruit softening. This chain is Xyloglucan endotransglucosylase protein 8, found in Diospyros kaki (Kaki persimmon).